We begin with the raw amino-acid sequence, 382 residues long: Carbamoyl phosphate synthase small chain (382 aa).

The segment at 1 to 189 is CPSase; that stretch reads MIKSALLVLE…GLPEAKSEDD (189 aa). Residues Ser-47 and Gly-241 each contribute to the L-glutamine site. One can recognise a Glutamine amidotransferase type-1 domain in the interval 193–380; the sequence is HVVAYDFGAK…IELIKHYRSS (188 aa). Catalysis depends on Cys-269, which acts as the Nucleophile. The L-glutamine site is built by Leu-270, Gln-273, Asn-311, Gly-313, and Phe-314. Active-site residues include His-353 and Glu-355.

Belongs to the CarA family. As to quaternary structure, composed of two chains; the small (or glutamine) chain promotes the hydrolysis of glutamine to ammonia, which is used by the large (or ammonia) chain to synthesize carbamoyl phosphate. Tetramer of heterodimers (alpha,beta)4.

It catalyses the reaction hydrogencarbonate + L-glutamine + 2 ATP + H2O = carbamoyl phosphate + L-glutamate + 2 ADP + phosphate + 2 H(+). It carries out the reaction L-glutamine + H2O = L-glutamate + NH4(+). The protein operates within amino-acid biosynthesis; L-arginine biosynthesis; carbamoyl phosphate from bicarbonate: step 1/1. Its pathway is pyrimidine metabolism; UMP biosynthesis via de novo pathway; (S)-dihydroorotate from bicarbonate: step 1/3. Its function is as follows. Small subunit of the glutamine-dependent carbamoyl phosphate synthetase (CPSase). CPSase catalyzes the formation of carbamoyl phosphate from the ammonia moiety of glutamine, carbonate, and phosphate donated by ATP, constituting the first step of 2 biosynthetic pathways, one leading to arginine and/or urea and the other to pyrimidine nucleotides. The small subunit (glutamine amidotransferase) binds and cleaves glutamine to supply the large subunit with the substrate ammonia. This chain is Carbamoyl phosphate synthase small chain, found in Salmonella typhi.